The following is a 372-amino-acid chain: Molybdopterin synthase catalytic subunit (372 aa).

Substrate is bound by residues 101–102 (HR), K117, and 124–126 (KKE).

Belongs to the MoaE family. MOCS2B subfamily. In terms of assembly, heterotetramer; composed of 2 small (Mocs2A) and 2 large (Mocs2B) subunits.

The protein resides in the cytoplasm. It carries out the reaction 2 [molybdopterin-synthase sulfur-carrier protein]-C-terminal-Gly-aminoethanethioate + cyclic pyranopterin phosphate + H2O = molybdopterin + 2 [molybdopterin-synthase sulfur-carrier protein]-C-terminal Gly-Gly + 2 H(+). It functions in the pathway cofactor biosynthesis; molybdopterin biosynthesis. Its function is as follows. Catalytic subunit of the molybdopterin synthase complex, a complex that catalyzes the conversion of precursor Z into molybdopterin. Acts by mediating the incorporation of 2 sulfur atoms from thiocarboxylated Mocs2A into precursor Z to generate a dithiolene group. This Drosophila willistoni (Fruit fly) protein is Molybdopterin synthase catalytic subunit.